The primary structure comprises 227 residues: Cytochrome c oxidase subunit 2 (227 aa).

The Mitochondrial intermembrane portion of the chain corresponds to 1–14 (MAYPFQLGLQDATS). A helical transmembrane segment spans residues 15 to 45 (PIMEELLHFHDHTLMIVFLISSLVLYIISLM). At 46–59 (LTTKLTHTSTMDAQ) the chain is on the mitochondrial matrix side. A helical membrane pass occupies residues 60-87 (EVETVWTILPAIILILIALLSLRILYMM). Topologically, residues 88–227 (DEINNPFLTM…YFETWSALMV (140 aa)) are mitochondrial intermembrane. His-161, Cys-196, Glu-198, Cys-200, His-204, and Met-207 together coordinate Cu cation. A Mg(2+)-binding site is contributed by Glu-198. Tyr-218 bears the Phosphotyrosine mark.

Belongs to the cytochrome c oxidase subunit 2 family. As to quaternary structure, component of the cytochrome c oxidase (complex IV, CIV), a multisubunit enzyme composed of 14 subunits. The complex is composed of a catalytic core of 3 subunits MT-CO1, MT-CO2 and MT-CO3, encoded in the mitochondrial DNA, and 11 supernumerary subunits COX4I, COX5A, COX5B, COX6A, COX6B, COX6C, COX7A, COX7B, COX7C, COX8 and NDUFA4, which are encoded in the nuclear genome. The complex exists as a monomer or a dimer and forms supercomplexes (SCs) in the inner mitochondrial membrane with NADH-ubiquinone oxidoreductase (complex I, CI) and ubiquinol-cytochrome c oxidoreductase (cytochrome b-c1 complex, complex III, CIII), resulting in different assemblies (supercomplex SCI(1)III(2)IV(1) and megacomplex MCI(2)III(2)IV(2)). Found in a complex with TMEM177, COA6, COX18, COX20, SCO1 and SCO2. Interacts with TMEM177 in a COX20-dependent manner. Interacts with COX20. Interacts with COX16. It depends on Cu cation as a cofactor.

The protein localises to the mitochondrion inner membrane. The catalysed reaction is 4 Fe(II)-[cytochrome c] + O2 + 8 H(+)(in) = 4 Fe(III)-[cytochrome c] + 2 H2O + 4 H(+)(out). Its function is as follows. Component of the cytochrome c oxidase, the last enzyme in the mitochondrial electron transport chain which drives oxidative phosphorylation. The respiratory chain contains 3 multisubunit complexes succinate dehydrogenase (complex II, CII), ubiquinol-cytochrome c oxidoreductase (cytochrome b-c1 complex, complex III, CIII) and cytochrome c oxidase (complex IV, CIV), that cooperate to transfer electrons derived from NADH and succinate to molecular oxygen, creating an electrochemical gradient over the inner membrane that drives transmembrane transport and the ATP synthase. Cytochrome c oxidase is the component of the respiratory chain that catalyzes the reduction of oxygen to water. Electrons originating from reduced cytochrome c in the intermembrane space (IMS) are transferred via the dinuclear copper A center (CU(A)) of subunit 2 and heme A of subunit 1 to the active site in subunit 1, a binuclear center (BNC) formed by heme A3 and copper B (CU(B)). The BNC reduces molecular oxygen to 2 water molecules using 4 electrons from cytochrome c in the IMS and 4 protons from the mitochondrial matrix. This Nyctereutes procyonoides (Raccoon dog) protein is Cytochrome c oxidase subunit 2 (MT-CO2).